We begin with the raw amino-acid sequence, 522 residues long: Na(+)/H(+) antiporter NhaB (522 aa).

The next 11 helical transmembrane spans lie at 25-45 (VFLVINPFIFWFHPFIAGWLL), 49-69 (FIFTLAMALKCYPLQPGGMLA), 87-107 (ILANFEVILLLMFMVAGIYFM), 128-162 (LSLAFCLTAAFLSAFLDALTVIAVIISVAMGFYGV), 201-221 (LMMHAAVGTALGGVMTLVGEP), 237-257 (FFFRMSPVTLLTLISGVVTCI), 302-322 (VFVGIWLIIGLAFHLASVGLI), 356-376 (LVVFFSVVAVIIDQHLFAPVI), 388-408 (LLLFYIFNGVLSAISDNVFVA), 446-466 (ATPNGQAAFLFLLTSSISPLI), and 476-496 (MALPYTIVLSIVGLLAVEYVL).

This sequence belongs to the NhaB Na(+)/H(+) (TC 2.A.34) antiporter family.

The protein localises to the cell inner membrane. It carries out the reaction 2 Na(+)(in) + 3 H(+)(out) = 2 Na(+)(out) + 3 H(+)(in). Functionally, na(+)/H(+) antiporter that extrudes sodium in exchange for external protons. In Actinobacillus succinogenes (strain ATCC 55618 / DSM 22257 / CCUG 43843 / 130Z), this protein is Na(+)/H(+) antiporter NhaB.